Reading from the N-terminus, the 178-residue chain is SCAN domain-containing protein 1 (178 aa).

Positions 1–107 (MAATEQSLAP…GSRPGPETFR (107 aa)) are disordered. The span at 9–18 (APAGSSAPPS) shows a compositional bias: low complexity. Residues 36–54 (GSSSTPEAPSIPDSSNPSA) show a composition bias toward polar residues. An SCAN box domain is found at 107-178 (RQRFRQFRYQ…RRRTDVRITG (72 aa)).

In terms of assembly, interacts with ZNF202.

Its subcellular location is the nucleus. Functionally, may regulate transcriptional activity. The protein is SCAN domain-containing protein 1 (SCAND1) of Bos taurus (Bovine).